A 908-amino-acid polypeptide reads, in one-letter code: Protein translocase subunit SecA (908 aa).

ATP is bound by residues Q87, 105-109 (GEGKT), and D507. Residues 860–898 (EALGNAEESDEASDQSVKTFERAGAKVGRNDPCPCGSGK) are disordered. Positions 892, 894, 903, and 904 each coordinate Zn(2+).

The protein belongs to the SecA family. Monomer and homodimer. Part of the essential Sec protein translocation apparatus which comprises SecA, SecYEG and auxiliary proteins SecDF-YajC and YidC. Zn(2+) is required as a cofactor.

It is found in the cell inner membrane. The protein resides in the cytoplasm. The catalysed reaction is ATP + H2O + cellular proteinSide 1 = ADP + phosphate + cellular proteinSide 2.. In terms of biological role, part of the Sec protein translocase complex. Interacts with the SecYEG preprotein conducting channel. Has a central role in coupling the hydrolysis of ATP to the transfer of proteins into and across the cell membrane, serving both as a receptor for the preprotein-SecB complex and as an ATP-driven molecular motor driving the stepwise translocation of polypeptide chains across the membrane. The polypeptide is Protein translocase subunit SecA (Methylobacillus flagellatus (strain ATCC 51484 / DSM 6875 / VKM B-1610 / KT)).